The following is an 84-amino-acid chain: Small ribosomal subunit protein uS17 (84 aa).

Belongs to the universal ribosomal protein uS17 family. As to quaternary structure, part of the 30S ribosomal subunit.

Functionally, one of the primary rRNA binding proteins, it binds specifically to the 5'-end of 16S ribosomal RNA. The protein is Small ribosomal subunit protein uS17 of Histophilus somni (strain 129Pt) (Haemophilus somnus).